The sequence spans 43 residues: Seed non-specific lipid transfer protein-like (43 aa).

Belongs to the plant LTP family. In terms of assembly, homodimer.

Plant non-specific lipid-transfer proteins transfer phospholipids as well as galactolipids across membranes. May play a role in wax or cutin deposition in the cell walls of expanding epidermal cells and certain secretory tissues. This isoform inhibits the hyphal growth of several fungi in vitro. This Raphanus sativus (Radish) protein is Seed non-specific lipid transfer protein-like.